The chain runs to 50 residues: MLTKYALVAVIVLCLTVLGFTLLVGDSLCEFTVKERNIEFKAVLAYEPKK.

A helical transmembrane segment spans residues 5-25 (YALVAVIVLCLTVLGFTLLVG).

This sequence belongs to the Hok/Gef family.

The protein resides in the cell inner membrane. In terms of biological role, toxic component of a type I toxin-antitoxin (TA) system. When overexpressed kills cells within minutes; causes collapse of the transmembrane potential and arrest of respiration. Its toxic effect is probably neutralized by an antisense antitoxin Sok RNA. The sequence is that of Protein HokE (hokE) from Escherichia coli O157:H7.